A 179-amino-acid chain; its full sequence is Large ribosomal subunit protein uL5 (179 aa).

The protein belongs to the universal ribosomal protein uL5 family. In terms of assembly, part of the 50S ribosomal subunit; part of the 5S rRNA/L5/L18/L25 subcomplex. Contacts the 5S rRNA and the P site tRNA. Forms a bridge to the 30S subunit in the 70S ribosome.

In terms of biological role, this is one of the proteins that bind and probably mediate the attachment of the 5S RNA into the large ribosomal subunit, where it forms part of the central protuberance. In the 70S ribosome it contacts protein S13 of the 30S subunit (bridge B1b), connecting the 2 subunits; this bridge is implicated in subunit movement. Contacts the P site tRNA; the 5S rRNA and some of its associated proteins might help stabilize positioning of ribosome-bound tRNAs. The polypeptide is Large ribosomal subunit protein uL5 (Burkholderia multivorans (strain ATCC 17616 / 249)).